The following is a 429-amino-acid chain: Glutamate-1-semialdehyde 2,1-aminomutase 2 (429 aa).

Lys-268 is subject to N6-(pyridoxal phosphate)lysine.

Belongs to the class-III pyridoxal-phosphate-dependent aminotransferase family. HemL subfamily. In terms of assembly, homodimer. It depends on pyridoxal 5'-phosphate as a cofactor.

It is found in the cytoplasm. The enzyme catalyses (S)-4-amino-5-oxopentanoate = 5-aminolevulinate. It functions in the pathway porphyrin-containing compound metabolism; protoporphyrin-IX biosynthesis; 5-aminolevulinate from L-glutamyl-tRNA(Glu): step 2/2. This Bacillus cereus (strain AH187) protein is Glutamate-1-semialdehyde 2,1-aminomutase 2.